The following is a 351-amino-acid chain: Methylxanthine N1-demethylase NdmA (351 aa).

Residues 17 to 125 (WHPVCTVTEL…CEERYGLIWI (109 aa)) enclose the Rieske domain. The [2Fe-2S] cluster site is built by C62, H64, C81, and H84.

The cofactor is [2Fe-2S] cluster.

It catalyses the reaction caffeine + NADH + O2 + H(+) = theobromine + formaldehyde + NAD(+) + H2O. The catalysed reaction is caffeine + NADPH + O2 + H(+) = theobromine + formaldehyde + NADP(+) + H2O. The enzyme catalyses theophylline + NADH + O2 + H(+) = 3-methylxanthine + formaldehyde + NAD(+) + H2O. It carries out the reaction theophylline + NADPH + O2 + H(+) = 3-methylxanthine + formaldehyde + NADP(+) + H2O. It catalyses the reaction 1,7-dimethylxanthine + NADH + O2 + H(+) = 7-methylxanthine + formaldehyde + NAD(+) + H2O. The catalysed reaction is 1,7-dimethylxanthine + NADPH + O2 + H(+) = 7-methylxanthine + formaldehyde + NADP(+) + H2O. It participates in alkaloid degradation. Functionally, involved in the caffeine degradation, which is the essential first step for assimilating the carbon and nitrogen in caffeine. Catalyzes the N1-demethylation of caffeine to produce theobromine and formaldehyde. Also catalyzes the N1-demethylation of theophylline, paraxanthine, and 1-methylxanthine to 3-methylxanthine, 7-methylxanthine, and xanthine, respectively. NADH is the preferred substrate. This Pseudomonas putida (Arthrobacter siderocapsulatus) protein is Methylxanthine N1-demethylase NdmA (ndmA).